The following is a 399-amino-acid chain: Protochlorophyllide reductase, chloroplastic (399 aa).

The N-terminal 64 residues, 1–64 (MALQTASMLP…RQKVGAVRAE (64 aa)), are a transit peptide targeting the chloroplast.

The protein belongs to the short-chain dehydrogenases/reductases (SDR) family. POR subfamily.

The protein resides in the plastid. It localises to the chloroplast. It carries out the reaction chlorophyllide a + NADP(+) = protochlorophyllide a + NADPH + H(+). The protein operates within porphyrin-containing compound metabolism; chlorophyll biosynthesis. Its function is as follows. Phototransformation of protochlorophyllide (Pchlide) to chlorophyllide (Chlide). The polypeptide is Protochlorophyllide reductase, chloroplastic (3PCR) (Pisum sativum (Garden pea)).